An 87-amino-acid chain; its full sequence is Neutrophil antibiotic peptide NP-3A (87 aa).

Positions 1–19 are cleaved as a signal peptide; that stretch reads MRTLTLLTTLLLLALHTQA. Residues 20–58 constitute a propeptide that is removed on maturation; the sequence is ESPQGSTKEAPDEEQDISVFFGGDKGTALQDAAVKAGVT. Cystine bridges form between C59–C87, C61–C76, and C66–C86.

It belongs to the alpha-defensin family. In terms of tissue distribution, highest expression in bone marrow and to a much lesser extent in small intestine.

The protein resides in the secreted. In terms of biological role, active in vitro against S.aureus, fungi, Gram-positive and Gram-negative bacteria and to a lesser extent against an enveloped virus. The polypeptide is Neutrophil antibiotic peptide NP-3A (Rattus norvegicus (Rat)).